Consider the following 436-residue polypeptide: Ribulose bisphosphate carboxylase large chain (436 aa).

Residues Asn104 and Thr154 each coordinate substrate. Lys156 acts as the Proton acceptor in catalysis. Lys158 is a binding site for substrate. Residues Lys182, Asp184, and Glu185 each contribute to the Mg(2+) site. The residue at position 182 (Lys182) is an N6-carboxylysine. His275 serves as the catalytic Proton acceptor. Arg276, His308, and Ser360 together coordinate substrate.

Belongs to the RuBisCO large chain family. Type I subfamily. In terms of assembly, heterohexadecamer of 8 large chains and 8 small chains; disulfide-linked. The disulfide link is formed within the large subunit homodimers. Mg(2+) is required as a cofactor. In terms of processing, the disulfide bond which can form in the large chain dimeric partners within the hexadecamer appears to be associated with oxidative stress and protein turnover.

It is found in the plastid. The protein localises to the chloroplast. The enzyme catalyses 2 (2R)-3-phosphoglycerate + 2 H(+) = D-ribulose 1,5-bisphosphate + CO2 + H2O. It carries out the reaction D-ribulose 1,5-bisphosphate + O2 = 2-phosphoglycolate + (2R)-3-phosphoglycerate + 2 H(+). Functionally, ruBisCO catalyzes two reactions: the carboxylation of D-ribulose 1,5-bisphosphate, the primary event in carbon dioxide fixation, as well as the oxidative fragmentation of the pentose substrate in the photorespiration process. Both reactions occur simultaneously and in competition at the same active site. The protein is Ribulose bisphosphate carboxylase large chain of Euglena geniculata.